The sequence spans 243 residues: 2-O-methyltransferase NoeI (243 aa).

It belongs to the FkbM methyltransferase family.

It is found in the cytoplasm. In terms of biological role, required for 2-O-methylation of the fucosyl group of Nod factors. This is 2-O-methyltransferase NoeI (noeI) from Sinorhizobium fredii (strain NBRC 101917 / NGR234).